Here is a 687-residue protein sequence, read N- to C-terminus: Pentatricopeptide repeat-containing protein At3g09060 (687 aa).

PPR repeat units lie at residues 42–76 (SAVV…ECKC), 77–107 (DEDV…MREI), 113–147 (AIRS…GVAP), 148–182 (NLQT…GFKP), 183–217 (DVFS…GVAP), 218–253 (DVTC…SVYP), 254–288 (NVKT…EREK), 289–323 (DLYT…KASI), 324–358 (DVVT…NSVN), 359–392 (IVSY…GYAA), 393–427 (DKTT…GGHL), 428–462 (DVYA…GVEL), 463–497 (NSHV…GCRP), 498–532 (TVVS…GWKP), 533–567 (DLKT…GLET), 568–602 (DVMM…NCTA), 603–637 (NLVT…GLQP), and 638–672 (DIIS…GIFP).

Belongs to the PPR family. P subfamily.

This Arabidopsis thaliana (Mouse-ear cress) protein is Pentatricopeptide repeat-containing protein At3g09060.